The chain runs to 147 residues: Ubiquitin-conjugating enzyme E2 D1 (147 aa).

Residues 1–147 (MALKRIQKEL…AREWTQKYAM (147 aa)) enclose the UBC core domain. C85 serves as the catalytic Glycyl thioester intermediate.

The protein belongs to the ubiquitin-conjugating enzyme family. Component of a E3 ubiquitin ligase complex containing UBE2D1, SIAH1, CACYBP/SIP, SKP1, APC and TBL1X. Interacts with RNF11. In terms of processing, autoubiquitinated.

It is found in the cytoplasm. It catalyses the reaction S-ubiquitinyl-[E1 ubiquitin-activating enzyme]-L-cysteine + [E2 ubiquitin-conjugating enzyme]-L-cysteine = [E1 ubiquitin-activating enzyme]-L-cysteine + S-ubiquitinyl-[E2 ubiquitin-conjugating enzyme]-L-cysteine.. The enzyme catalyses S-ubiquitinyl-[E1 ubiquitin-activating enzyme]-L-cysteine + [acceptor protein]-L-lysine = [E1 ubiquitin-activating enzyme]-L-cysteine + N(6)-monoubiquitinyl-[acceptor protein]-L-lysine.. It functions in the pathway protein modification; protein ubiquitination. Its function is as follows. Accepts ubiquitin from the E1 complex and catalyzes its covalent attachment to other proteins. In vitro catalyzes 'Lys-48'-linked polyubiquitination. Mediates the selective degradation of short-lived and abnormal proteins. Functions in the E6/E6-AP-induced ubiquitination of p53/TP53. Mediates ubiquitination of PEX5 and auto-ubiquitination of STUB1, TRAF6 and TRIM63/MURF1. Ubiquitinates STUB1-associated HSP90AB1 in vitro. Lacks inherent specificity for any particular lysine residue of ubiquitin. Essential for viral activation of IRF3. Mediates polyubiquitination of CYP3A4. The sequence is that of Ubiquitin-conjugating enzyme E2 D1 (UBE2D1) from Bos taurus (Bovine).